A 170-amino-acid chain; its full sequence is Adenine phosphoribosyltransferase (170 aa).

This sequence belongs to the purine/pyrimidine phosphoribosyltransferase family. In terms of assembly, homodimer.

It localises to the cytoplasm. The enzyme catalyses AMP + diphosphate = 5-phospho-alpha-D-ribose 1-diphosphate + adenine. It functions in the pathway purine metabolism; AMP biosynthesis via salvage pathway; AMP from adenine: step 1/1. In terms of biological role, catalyzes a salvage reaction resulting in the formation of AMP, that is energically less costly than de novo synthesis. The chain is Adenine phosphoribosyltransferase from Lysinibacillus sphaericus (strain C3-41).